The chain runs to 1317 residues: ABC transporter C family member 14 (1317 aa).

The ABC transmembrane type-1 1 domain maps to 119-404 (NKYALISNIF…LPEDIYKAIG (286 aa)). 5 consecutive transmembrane segments (helical) span residues 127–147 (IFIT…INYI), 156–176 (SILK…GQSI), 249–269 (ILIL…VGFG), 341–361 (VLFW…VLVS), and 375–395 (LDVT…LIYL). Residues 426–451 (ENNQNINFNNNNNNNNNNKNNNNNDD) are disordered. The span at 427 to 449 (NNQNINFNNNNNNNNNNKNNNNN) shows a compositional bias: low complexity. Residues 490–710 (ENEENIKINE…ISDKNDPNLI (221 aa)) enclose the ABC transporter 1 domain. 522–529 (GVVGSGKT) is an ATP binding site. 5 helical membrane-spanning segments follow: residues 734–754 (YFSY…FFIG), 778–798 (DSFY…LLMI), 871–891 (LISI…LFII), 969–989 (LEVM…LFTS), and 992–1012 (GLAA…SWGV). Positions 744–1027 (LFITISLFFI…LEVKMNSFQR (284 aa)) constitute an ABC transmembrane type-1 2 domain. The 236-residue stretch at 1071 to 1306 (IEFKNVEIKY…PNSKFNKLIK (236 aa)) folds into the ABC transporter 2 domain. 1105 to 1112 (GRTGAGKT) is a binding site for ATP.

It belongs to the ABC transporter superfamily. ABCC family. Conjugate transporter (TC 3.A.1.208) subfamily.

It is found in the membrane. This chain is ABC transporter C family member 14 (abcC14), found in Dictyostelium discoideum (Social amoeba).